The sequence spans 427 residues: Gamma-glutamyl phosphate reductase (427 aa).

This sequence belongs to the gamma-glutamyl phosphate reductase family.

The protein localises to the cytoplasm. It catalyses the reaction L-glutamate 5-semialdehyde + phosphate + NADP(+) = L-glutamyl 5-phosphate + NADPH + H(+). It participates in amino-acid biosynthesis; L-proline biosynthesis; L-glutamate 5-semialdehyde from L-glutamate: step 2/2. Functionally, catalyzes the NADPH-dependent reduction of L-glutamate 5-phosphate into L-glutamate 5-semialdehyde and phosphate. The product spontaneously undergoes cyclization to form 1-pyrroline-5-carboxylate. This Allorhizobium ampelinum (strain ATCC BAA-846 / DSM 112012 / S4) (Agrobacterium vitis (strain S4)) protein is Gamma-glutamyl phosphate reductase.